Reading from the N-terminus, the 335-residue chain is Glucokinase (335 aa).

11–16 (ADIGGT) serves as a coordination point for ATP.

It belongs to the bacterial glucokinase family.

The protein localises to the cytoplasm. The catalysed reaction is D-glucose + ATP = D-glucose 6-phosphate + ADP + H(+). This is Glucokinase from Xanthomonas oryzae pv. oryzae (strain MAFF 311018).